Reading from the N-terminus, the 148-residue chain is Large ribosomal subunit protein bL9 (148 aa).

Belongs to the bacterial ribosomal protein bL9 family.

Its function is as follows. Binds to the 23S rRNA. The protein is Large ribosomal subunit protein bL9 of Marinobacter nauticus (strain ATCC 700491 / DSM 11845 / VT8) (Marinobacter aquaeolei).